A 247-amino-acid chain; its full sequence is MNVLLCYINTLNRFYDISAVEVGQHFYWQIGDFQVHAQVLITSWVVIAILLISTILVVRNPQTIPTSGQNFFEYVLEFIRDVSKTQIGEEYGPWVPFIGTLFLFIFVSNWSGALLPWKIIKLPHGELAAPTNDINTTVALALLTSVAYFYAGISKKGLAYFGKYIQPTPILLPINILEDFTKPLSLSFRLFGNILADELVVVVLVSLVPLVVPIPVMFLGLFTSGIQALIFATLAAAYIGESMEGHH.

Helical transmembrane passes span 38–58 (QVLITSWVVIAILLISTILVV), 95–115 (VPFIGTLFLFIFVSNWSGALL), 134–154 (INTTVALALLTSVAYFYAGIS), 199–219 (LVVVVLVSLVPLVVPIPVMFL), and 220–240 (GLFTSGIQALIFATLAAAYIG).

This sequence belongs to the ATPase A chain family. F-type ATPases have 2 components, CF(1) - the catalytic core - and CF(0) - the membrane proton channel. CF(1) has five subunits: alpha(3), beta(3), gamma(1), delta(1), epsilon(1). CF(0) has four main subunits: a, b, b' and c.

It is found in the plastid. The protein resides in the chloroplast thylakoid membrane. Key component of the proton channel; it plays a direct role in the translocation of protons across the membrane. The chain is ATP synthase subunit a, chloroplastic from Pisum sativum (Garden pea).